Here is a 232-residue protein sequence, read N- to C-terminus: 2-C-methyl-D-erythritol 4-phosphate cytidylyltransferase (232 aa).

Belongs to the IspD/TarI cytidylyltransferase family. IspD subfamily.

It catalyses the reaction 2-C-methyl-D-erythritol 4-phosphate + CTP + H(+) = 4-CDP-2-C-methyl-D-erythritol + diphosphate. It participates in isoprenoid biosynthesis; isopentenyl diphosphate biosynthesis via DXP pathway; isopentenyl diphosphate from 1-deoxy-D-xylulose 5-phosphate: step 2/6. Functionally, catalyzes the formation of 4-diphosphocytidyl-2-C-methyl-D-erythritol from CTP and 2-C-methyl-D-erythritol 4-phosphate (MEP). This chain is 2-C-methyl-D-erythritol 4-phosphate cytidylyltransferase, found in Rhodococcus erythropolis (strain PR4 / NBRC 100887).